Here is a 620-residue protein sequence, read N- to C-terminus: MSFDIAKYPTLALVDSTQELRLLPKESLPKLCDELRRYLLDSVSRSSGHFASGLGTVELTVALHYVYNTPFDQLIWDVGHQAYPHKILTGRRDKIGTIRQKGGLHPFPWRGESEYDVLSVGHSSTSISAGIGIAVTAEKEGKNRRTVCVIGDGAITAGMAFEAMNHAGDIRPDMLVVLNDNEMSISENVGALNNHLAQLLSGKLYSSLREGGKKVFSGVPPIKELLKRTEEHIKGMVVPGTLFEELGFNYIGPVDGHDVLGLITTLKNMRDLKGPQFLHIMTKKGRGYEPAEKDPITFHAVPKFDPSSGCLPKSSGGLPSYSKIFGDWLCETAAKDNKLMAITPAMREGSGMVEFSRKFPDRYFDVAIAEQHAVTFAAGLAIGGYKPIVAIYSTFLQRAYDQVLHDVAIQKLPVLFAIDRAGIVGADGQTHQGAFDLSYLRCIPEMVIMTPSDENECRQMLYTGYHYNDGPSAVRYPRGNAVGVELTPLEKLPIGKGIVKRRGEKLAILNFGTLMPDAAKVAESLNATLVDMRFVKPLDEALILEMAASHEALVTVEENAIMGGAGSGVNEVLMAHRKPVPVLNIGLPDFFIPQGTQEEMRAELGLDAAGMEAKIKAWLA.

Thiamine diphosphate-binding positions include His-80 and 121 to 123; that span reads GHS. Residue Asp-152 coordinates Mg(2+). Residues 153–154, Asn-181, Tyr-288, and Glu-370 contribute to the thiamine diphosphate site; that span reads GA. Asn-181 contacts Mg(2+).

This sequence belongs to the transketolase family. DXPS subfamily. In terms of assembly, homodimer. The cofactor is Mg(2+). It depends on thiamine diphosphate as a cofactor.

It catalyses the reaction D-glyceraldehyde 3-phosphate + pyruvate + H(+) = 1-deoxy-D-xylulose 5-phosphate + CO2. The protein operates within metabolic intermediate biosynthesis; 1-deoxy-D-xylulose 5-phosphate biosynthesis; 1-deoxy-D-xylulose 5-phosphate from D-glyceraldehyde 3-phosphate and pyruvate: step 1/1. Its function is as follows. Catalyzes the acyloin condensation reaction between C atoms 2 and 3 of pyruvate and glyceraldehyde 3-phosphate to yield 1-deoxy-D-xylulose-5-phosphate (DXP). The chain is 1-deoxy-D-xylulose-5-phosphate synthase from Shigella sonnei (strain Ss046).